The primary structure comprises 92 residues: Small ribosomal subunit protein uS19 (92 aa).

This sequence belongs to the universal ribosomal protein uS19 family.

Protein S19 forms a complex with S13 that binds strongly to the 16S ribosomal RNA. In Oceanobacillus iheyensis (strain DSM 14371 / CIP 107618 / JCM 11309 / KCTC 3954 / HTE831), this protein is Small ribosomal subunit protein uS19.